The chain runs to 517 residues: Crotonobetaine/carnitine--CoA ligase (517 aa).

It belongs to the ATP-dependent AMP-binding enzyme family.

The enzyme catalyses 4-(trimethylamino)butanoate + ATP + CoA = 4-(trimethylamino)butanoyl-CoA + AMP + diphosphate. It carries out the reaction crotonobetaine + ATP + CoA = crotonobetainyl-CoA + AMP + diphosphate. It catalyses the reaction (R)-carnitine + ATP + CoA = (R)-carnitinyl-CoA + AMP + diphosphate. It participates in amine and polyamine metabolism; carnitine metabolism. Its function is as follows. Catalyzes the transfer of CoA to carnitine, generating the initial carnitinyl-CoA needed for the CaiB reaction cycle. Also has activity toward crotonobetaine and gamma-butyrobetaine. This chain is Crotonobetaine/carnitine--CoA ligase, found in Escherichia coli (strain K12 / MC4100 / BW2952).